Here is a 148-residue protein sequence, read N- to C-terminus: Lysozyme C (148 aa).

Positions 1–18 (MKVLIILGLVLLSVMVQG) are cleaved as a signal peptide. The C-type lysozyme domain maps to 19–148 (KVFERCELAR…VSQYVQGCGV (130 aa)). 4 disulfides stabilise this stretch: cysteine 24–cysteine 146, cysteine 48–cysteine 134, cysteine 83–cysteine 99, and cysteine 95–cysteine 113. Residues glutamate 53 and aspartate 71 contribute to the active site.

This sequence belongs to the glycosyl hydrolase 22 family. In terms of assembly, monomer.

It carries out the reaction Hydrolysis of (1-&gt;4)-beta-linkages between N-acetylmuramic acid and N-acetyl-D-glucosamine residues in a peptidoglycan and between N-acetyl-D-glucosamine residues in chitodextrins.. Functionally, lysozymes have primarily a bacteriolytic function; those in tissues and body fluids are associated with the monocyte-macrophage system and enhance the activity of immunoagents. The chain is Lysozyme C (LYZ) from Callithrix jacchus (White-tufted-ear marmoset).